Here is a 466-residue protein sequence, read N- to C-terminus: Bifunctional protein GlmU (466 aa).

Positions Met1–Arg233 are pyrophosphorylase. Residues Leu11–Gly14, Lys25, Gln79, and Gly84–Thr85 contribute to the UDP-N-acetyl-alpha-D-glucosamine site. Residue Asp108 coordinates Mg(2+). Gly143, Glu158, Asn173, and Asn231 together coordinate UDP-N-acetyl-alpha-D-glucosamine. Asn231 contributes to the Mg(2+) binding site. Residues Ala234–Gln254 are linker. Residues Gly255 to Ala466 are N-acetyltransferase. Residues Arg337 and Lys355 each contribute to the UDP-N-acetyl-alpha-D-glucosamine site. The active-site Proton acceptor is His367. 2 residues coordinate UDP-N-acetyl-alpha-D-glucosamine: Tyr370 and Asn381. Residues Ala384, Asn390 to Tyr391, Ser409, Ala427, and Arg444 each bind acetyl-CoA.

This sequence in the N-terminal section; belongs to the N-acetylglucosamine-1-phosphate uridyltransferase family. The protein in the C-terminal section; belongs to the transferase hexapeptide repeat family. Homotrimer. Mg(2+) is required as a cofactor.

It is found in the cytoplasm. It catalyses the reaction alpha-D-glucosamine 1-phosphate + acetyl-CoA = N-acetyl-alpha-D-glucosamine 1-phosphate + CoA + H(+). The catalysed reaction is N-acetyl-alpha-D-glucosamine 1-phosphate + UTP + H(+) = UDP-N-acetyl-alpha-D-glucosamine + diphosphate. It participates in nucleotide-sugar biosynthesis; UDP-N-acetyl-alpha-D-glucosamine biosynthesis; N-acetyl-alpha-D-glucosamine 1-phosphate from alpha-D-glucosamine 6-phosphate (route II): step 2/2. Its pathway is nucleotide-sugar biosynthesis; UDP-N-acetyl-alpha-D-glucosamine biosynthesis; UDP-N-acetyl-alpha-D-glucosamine from N-acetyl-alpha-D-glucosamine 1-phosphate: step 1/1. The protein operates within bacterial outer membrane biogenesis; LPS lipid A biosynthesis. In terms of biological role, catalyzes the last two sequential reactions in the de novo biosynthetic pathway for UDP-N-acetylglucosamine (UDP-GlcNAc). The C-terminal domain catalyzes the transfer of acetyl group from acetyl coenzyme A to glucosamine-1-phosphate (GlcN-1-P) to produce N-acetylglucosamine-1-phosphate (GlcNAc-1-P), which is converted into UDP-GlcNAc by the transfer of uridine 5-monophosphate (from uridine 5-triphosphate), a reaction catalyzed by the N-terminal domain. The polypeptide is Bifunctional protein GlmU (Dichelobacter nodosus (strain VCS1703A)).